Here is a 729-residue protein sequence, read N- to C-terminus: Polyribonucleotide nucleotidyltransferase (729 aa).

Mg(2+)-binding residues include Asp485 and Asp491. One can recognise a KH domain in the interval 552–611 (PRITTMKVAEDKIRTIIGKGGATIKGLIESTGVSIDIDDSGVIQLFSPDKMALEEAQKQI). In terms of domain architecture, S1 motif spans 621–689 (GQTYQGKVSK…KQGRVKLEWK (69 aa)).

Belongs to the polyribonucleotide nucleotidyltransferase family. Component of the RNA degradosome, which is a multiprotein complex involved in RNA processing and mRNA degradation. Mg(2+) serves as cofactor.

Its subcellular location is the cytoplasm. The enzyme catalyses RNA(n+1) + phosphate = RNA(n) + a ribonucleoside 5'-diphosphate. Involved in mRNA degradation. Catalyzes the phosphorolysis of single-stranded polyribonucleotides processively in the 3'- to 5'-direction. The chain is Polyribonucleotide nucleotidyltransferase from Legionella pneumophila (strain Corby).